A 505-amino-acid polypeptide reads, in one-letter code: Glycerol kinase (505 aa).

Threonine 15 serves as a coordination point for ADP. Threonine 15, threonine 16, and serine 17 together coordinate ATP. Threonine 15 contacts sn-glycerol 3-phosphate. Arginine 19 serves as a coordination point for ADP. Sn-glycerol 3-phosphate-binding residues include arginine 85, glutamate 86, tyrosine 136, and aspartate 249. Glycerol is bound by residues arginine 85, glutamate 86, tyrosine 136, aspartate 249, and glutamine 250. The ADP site is built by threonine 271 and glycine 314. Residues threonine 271, glycine 314, glutamine 318, and glycine 415 each contribute to the ATP site. ADP contacts are provided by glycine 415 and asparagine 419.

This sequence belongs to the FGGY kinase family.

The catalysed reaction is glycerol + ATP = sn-glycerol 3-phosphate + ADP + H(+). It functions in the pathway polyol metabolism; glycerol degradation via glycerol kinase pathway; sn-glycerol 3-phosphate from glycerol: step 1/1. With respect to regulation, inhibited by fructose 1,6-bisphosphate (FBP). Key enzyme in the regulation of glycerol uptake and metabolism. Catalyzes the phosphorylation of glycerol to yield sn-glycerol 3-phosphate. In Mycoplasma mycoides subsp. mycoides SC (strain CCUG 32753 / NCTC 10114 / PG1), this protein is Glycerol kinase.